Here is a 572-residue protein sequence, read N- to C-terminus: Dityrosine transporter 1 (572 aa).

2 disordered regions span residues 1 to 28 (MGSE…STFH) and 49 to 95 (RANI…SPDT). The Cytoplasmic portion of the chain corresponds to 1–110 (MGSEPFQKKN…YTYFSKDQRL (110 aa)). Over residues 13–28 (LQINSQESGTTRSTFH) the composition is skewed to polar residues. Basic and acidic residues predominate over residues 50 to 62 (ANIDHDVFHEHPD). Residues 83 to 95 (SSNSQSRDPSPDT) show a composition bias toward polar residues. A helical membrane pass occupies residues 111-131 (IIFGIIIFIGFLGPMSGNIYI). Residues 132 to 149 (PALPLLQREYDVSATTIN) are Extracellular-facing. Residues 150-170 (ATVSVFMAVFSVGPLFWGALA) traverse the membrane as a helical segment. At 171 to 184 (DFGGRKFLYMVSLS) the chain is on the cytoplasmic side. A helical membrane pass occupies residues 185–205 (LMLIVNILLAAVPVNIAALFV). The Extracellular segment spans residues 206–207 (LR). The helical transmembrane segment at 208 to 228 (IFQAFASSSVISLGAGTVTDV) threads the bilayer. Residues 229–240 (VPPKHRGKAIAY) are Cytoplasmic-facing. The chain crosses the membrane as a helical span at residues 241 to 261 (FMMGPNMGPIIAPIVAGLILM). The Extracellular portion of the chain corresponds to 262-267 (KGNYWR). Residues 268-288 (WLFGFTSIMTGIALILVTALL) form a helical membrane-spanning segment. Residues 289–366 (PETLRCIVGN…TLYWKMIKCP (78 aa)) are Cytoplasmic-facing. Residues 367-387 (PIIITSVSTALLFSSYYAFSV) form a helical membrane-spanning segment. At 388–398 (TFSYYLEHDYR) the chain is on the extracellular side. Residues 399 to 419 (FTMLEIGAAYVCPGVAMLLGS) traverse the membrane as a helical segment. At 420 to 446 (QSGGHLSDYLRSRWIKSHPKKKFPAEF) the chain is on the cytoplasmic side. A helical membrane pass occupies residues 447–469 (RLLLNLIGILLTICGTIGYGWAI). At 470–472 (FFH) the chain is on the extracellular side. The chain crosses the membrane as a helical span at residues 473–493 (YHFVVLLVFSALTAFGMTWCS). At 494–520 (NTSMTYLTELFPKRAAGTVAVSSFFRN) the chain is on the cytoplasmic side. The helical transmembrane segment at 521-541 (VGAAISSAIILQLCNAMGIGW) threads the bilayer. Residue Cys542 is a topological domain, extracellular. The helical transmembrane segment at 543-563 (FTGLGLCSSISLIGILYLLIF) threads the bilayer. Residues 548–572 (LCSSISLIGILYLLIFQRKYTAKEF) form a required for the localization to the prospore membrane region. Over 564-572 (QRKYTAKEF) the chain is Cytoplasmic.

The protein belongs to the major facilitator superfamily. CAR1 family. Phosphorylated.

It is found in the prospore membrane. Functionally, prospore-specific dityrosine transporter responsible for translocation of dityrosine through the prospore membrane and required for the formation of the outermost layer of the spore. The chain is Dityrosine transporter 1 (DTR1) from Saccharomyces cerevisiae (strain ATCC 204508 / S288c) (Baker's yeast).